The sequence spans 883 residues: uncharacterized protein (883 aa).

A disordered region spans residues 258 to 373; sequence INNQSDNQSN…NQFNKPDNEP (116 aa). Composition is skewed to low complexity over residues 259-268, 277-317, and 324-333; these read NNQSDNQSNS, EPNG…SNSE, and NEPNTEPNTE. The span at 334 to 347 shows a compositional bias: polar residues; it reads SNGQSNSELNNQSD. Positions 348-368 are enriched in low complexity; the sequence is NHPNNEPNSEPNNEPNNQFNK.

The protein belongs to the mimivirus L137 family.

This is an uncharacterized protein from Acanthamoeba polyphaga mimivirus (APMV).